We begin with the raw amino-acid sequence, 256 residues long: Ribonuclease 3-like protein 1 (256 aa).

Residues 22–168 (AEVERALGGY…IVGAVYLDSK (147 aa)) form the RNase III domain. Residues glutamate 65, aspartate 154, and glutamate 157 each contribute to the Mg(2+) site.

Requires Mg(2+) as cofactor. It depends on Mn(2+) as a cofactor.

Cleaves double-stranded RNA (dsRNA). The sequence is that of Ribonuclease 3-like protein 1 from Oryza sativa subsp. japonica (Rice).